Reading from the N-terminus, the 308-residue chain is Taste receptor type 2 member 43 (308 aa).

A topological domain (extracellular) is located at residue M1. A helical transmembrane segment spans residues 2-22 (ITFLPIIFSILVVFTFVIGNF). Over 23–46 (ANGFIALVNSIEWVKRQKISFADQ) the chain is Cytoplasmic. Residues 47–67 (ILTALAVSRVGLLWILLLNWY) traverse the membrane as a helical segment. The Extracellular portion of the chain corresponds to 68–86 (STVLNPAFYSVEVRTIAYN). A helical membrane pass occupies residues 87–107 (LWAVINHFSNWLATSLSIFYL). Residues 108–126 (LKIANFSNLIFLHLRRRVK) lie on the Cytoplasmic side of the membrane. Residues 127–147 (SVVLVILWGPLLFLVCHLFVV) form a helical membrane-spanning segment. The Extracellular segment spans residues 148–178 (NMNEIIQTKEYEGNMTWKSKLRSAMYLSNTT). N-linked (GlcNAc...) asparagine glycans are attached at residues N161 and N176. The helical transmembrane segment at 179 to 199 (VTILANLVPFILTLISFLLLI) threads the bilayer. The Cytoplasmic portion of the chain corresponds to 200 to 229 (CSLCKHLKKMQLRDKGSQDPSTKVHIKALQ). Residues 230–249 (TVISLSLCAIYFLSIMISSW) form a helical membrane-spanning segment. Residues 250–258 (SLGRVENKA) are Extracellular-facing. The chain crosses the membrane as a helical span at residues 259–279 (IFMFCKAIRFSYPSAHAFILI). The Cytoplasmic segment spans residues 280–308 (WGNKKLKQTLLSVLWNVRYCVKGQKLQSP).

It belongs to the G-protein coupled receptor T2R family.

Its subcellular location is the membrane. It is found in the cell projection. The protein localises to the cilium membrane. In terms of biological role, gustducin-coupled receptor immplicated in the perception of bitter compounds in the oral cavity and the gastrointestinal tract. Signals through PLCB2 and the calcium-regulated cation channel TRPM5. Activated by the sulfonyl amide sweeteners saccharin and acesulfame K. In airway epithelial cells, binding of bitter compounds increases the intracellular calcium ion concentration and stimulates ciliary beat frequency. May act as chemosensory receptors in airway epithelial cells to detect and eliminate potential noxious agents from the airways. This chain is Taste receptor type 2 member 43 (TAS2R43), found in Macaca mulatta (Rhesus macaque).